We begin with the raw amino-acid sequence, 140 residues long: Putative pre-16S rRNA nuclease (140 aa).

It belongs to the YqgF nuclease family.

It localises to the cytoplasm. In terms of biological role, could be a nuclease involved in processing of the 5'-end of pre-16S rRNA. This is Putative pre-16S rRNA nuclease from Yersinia pseudotuberculosis serotype O:1b (strain IP 31758).